A 336-amino-acid polypeptide reads, in one-letter code: Holliday junction branch migration complex subunit RuvB (336 aa).

A large ATPase domain (RuvB-L) region spans residues 4 to 184; sequence ADRLIQPQVQ…FGIPLRLEFY (181 aa). Residues Arg-24, Gly-65, Lys-68, Thr-69, Thr-70, 131-133, Arg-174, Tyr-184, and Arg-221 contribute to the ATP site; that span reads EDY. Residue Thr-69 participates in Mg(2+) binding. Residues 185–255 are small ATPAse domain (RuvB-S); the sequence is NVADLTTIVT…VAEYALDLLD (71 aa). The interval 258–336 is head domain (RuvB-H); the sequence is DQGFDYLDRK…HFSLVRPEKA (79 aa). 3 residues coordinate DNA: Arg-294, Arg-313, and Arg-318.

This sequence belongs to the RuvB family. In terms of assembly, homohexamer. Forms an RuvA(8)-RuvB(12)-Holliday junction (HJ) complex. HJ DNA is sandwiched between 2 RuvA tetramers; dsDNA enters through RuvA and exits via RuvB. An RuvB hexamer assembles on each DNA strand where it exits the tetramer. Each RuvB hexamer is contacted by two RuvA subunits (via domain III) on 2 adjacent RuvB subunits; this complex drives branch migration. In the full resolvosome a probable DNA-RuvA(4)-RuvB(12)-RuvC(2) complex forms which resolves the HJ.

The protein resides in the cytoplasm. The enzyme catalyses ATP + H2O = ADP + phosphate + H(+). In terms of biological role, the RuvA-RuvB-RuvC complex processes Holliday junction (HJ) DNA during genetic recombination and DNA repair, while the RuvA-RuvB complex plays an important role in the rescue of blocked DNA replication forks via replication fork reversal (RFR). RuvA specifically binds to HJ cruciform DNA, conferring on it an open structure. The RuvB hexamer acts as an ATP-dependent pump, pulling dsDNA into and through the RuvAB complex. RuvB forms 2 homohexamers on either side of HJ DNA bound by 1 or 2 RuvA tetramers; 4 subunits per hexamer contact DNA at a time. Coordinated motions by a converter formed by DNA-disengaged RuvB subunits stimulates ATP hydrolysis and nucleotide exchange. Immobilization of the converter enables RuvB to convert the ATP-contained energy into a lever motion, pulling 2 nucleotides of DNA out of the RuvA tetramer per ATP hydrolyzed, thus driving DNA branch migration. The RuvB motors rotate together with the DNA substrate, which together with the progressing nucleotide cycle form the mechanistic basis for DNA recombination by continuous HJ branch migration. Branch migration allows RuvC to scan DNA until it finds its consensus sequence, where it cleaves and resolves cruciform DNA. The polypeptide is Holliday junction branch migration complex subunit RuvB (Shewanella frigidimarina (strain NCIMB 400)).